Here is a 219-residue protein sequence, read N- to C-terminus: Holliday junction branch migration complex subunit RuvA (219 aa).

Residues 1–71 are domain I; the sequence is MISWIKGELV…EDSDMLFGFS (71 aa). The domain II stretch occupies residues 72–150; it reads TKDQRDFFIQ…NKEIEKENLN (79 aa). Residues 151–161 are flexible linker; that stretch reads INNFLEKNKDL. Positions 161 to 219 are domain III; it reads LDSIFKDIDLTLQSLNYSKKEIKNLFPKLINNIKNSSLEKESISFENLLKEAMNYLDHK.

It belongs to the RuvA family. In terms of assembly, homotetramer. Forms an RuvA(8)-RuvB(12)-Holliday junction (HJ) complex. HJ DNA is sandwiched between 2 RuvA tetramers; dsDNA enters through RuvA and exits via RuvB. An RuvB hexamer assembles on each DNA strand where it exits the tetramer. Each RuvB hexamer is contacted by two RuvA subunits (via domain III) on 2 adjacent RuvB subunits; this complex drives branch migration. In the full resolvosome a probable DNA-RuvA(4)-RuvB(12)-RuvC(2) complex forms which resolves the HJ.

Its subcellular location is the cytoplasm. The RuvA-RuvB-RuvC complex processes Holliday junction (HJ) DNA during genetic recombination and DNA repair, while the RuvA-RuvB complex plays an important role in the rescue of blocked DNA replication forks via replication fork reversal (RFR). RuvA specifically binds to HJ cruciform DNA, conferring on it an open structure. The RuvB hexamer acts as an ATP-dependent pump, pulling dsDNA into and through the RuvAB complex. HJ branch migration allows RuvC to scan DNA until it finds its consensus sequence, where it cleaves and resolves the cruciform DNA. The protein is Holliday junction branch migration complex subunit RuvA of Prochlorococcus marinus subsp. pastoris (strain CCMP1986 / NIES-2087 / MED4).